Here is a 119-residue protein sequence, read N- to C-terminus: Large ribosomal subunit protein bL20 (119 aa).

The protein belongs to the bacterial ribosomal protein bL20 family.

In terms of biological role, binds directly to 23S ribosomal RNA and is necessary for the in vitro assembly process of the 50S ribosomal subunit. It is not involved in the protein synthesizing functions of that subunit. The chain is Large ribosomal subunit protein bL20 from Chloroflexus aggregans (strain MD-66 / DSM 9485).